The chain runs to 496 residues: Adenosine transporter 1 (496 aa).

Residues methionine 1–glutamate 26 lie on the Cytoplasmic side of the membrane. A helical transmembrane segment spans residues phenylalanine 27–valine 47. The Extracellular portion of the chain corresponds to phenylalanine 48–asparagine 77. The chain crosses the membrane as a helical span at residues valine 78–leucine 98. Topologically, residues leucine 99 to methionine 107 are cytoplasmic. A helical transmembrane segment spans residues leucine 108–valine 128. Over proline 129–glutamate 135 the chain is Extracellular. Residues glycine 136–phenylalanine 156 form a helical membrane-spanning segment. The Cytoplasmic portion of the chain corresponds to glutamate 157–threonine 172. The helical transmembrane segment at serine 173–valine 193 threads the bilayer. The Extracellular segment spans residues lysine 194–serine 208. A helical transmembrane segment spans residues tyrosine 209–methionine 229. The Cytoplasmic portion of the chain corresponds to arginine 230–lysine 336. The chain crosses the membrane as a helical span at residues tryptophan 337–alanine 357. Residues threonine 358–lysine 365 lie on the Extracellular side of the membrane. The chain crosses the membrane as a helical span at residues tryptophan 366–proline 386. Residues alanine 387–arginine 399 are Cytoplasmic-facing. The chain crosses the membrane as a helical span at residues tryptophan 400 to serine 420. Residues tyrosine 421–tyrosine 431 lie on the Extracellular side of the membrane. Residues valine 432–glycine 452 form a helical membrane-spanning segment. Topologically, residues proline 453–arginine 464 are cytoplasmic. A helical transmembrane segment spans residues phenylalanine 465 to leucine 485. At serine 486–tyrosine 496 the chain is on the extracellular side.

This sequence belongs to the SLC29A/ENT transporter (TC 2.A.57) family.

Its subcellular location is the membrane. The enzyme catalyses adenosine(in) = adenosine(out). Its function is as follows. Adenosine transporter. This chain is Adenosine transporter 1, found in Crithidia fasciculata.